The primary structure comprises 120 residues: uncharacterized protein (120 aa).

This is an uncharacterized protein from Enterobacteria phage T4 (Bacteriophage T4).